We begin with the raw amino-acid sequence, 77 residues long: RNA-binding protein Hfq (77 aa).

Residues 10–70 form the Sm domain; the sequence is DAFLNHVRKT…ISTVMPAQPI (61 aa).

Belongs to the Hfq family. Homohexamer.

Its function is as follows. RNA chaperone that binds small regulatory RNA (sRNAs) and mRNAs to facilitate mRNA translational regulation in response to envelope stress, environmental stress and changes in metabolite concentrations. Also binds with high specificity to tRNAs. The chain is RNA-binding protein Hfq from Jannaschia sp. (strain CCS1).